The following is a 190-amino-acid chain: Dynein axonemal light chain 1 (190 aa).

An N-acetylalanine modification is found at alanine 2. 4 LRR repeats span residues asparagine 49–lysine 70, asparagine 71–glycine 92, threonine 94–lysine 115, and lysine 116–alanine 137. At serine 56 the chain carries Phosphoserine. Residues asparagine 150–serine 190 form the LRRCT domain.

Belongs to the dynein light chain LC1-type family. As to quaternary structure, interacts with ZMYND10 (via C-terminus). Interacts with DNAH5, a outer arm dynein heavy chain. Interacts with tubulin located within the A-tubule of the outer doublets in a ATP-independent manner. In terms of tissue distribution, expressed in the respiratory epithelium of the upper airways and the ependymal cells lining the brain ventricles.

The protein localises to the cytoplasm. It is found in the cytoskeleton. It localises to the cilium axoneme. In terms of biological role, part of the multisubunit axonemal ATPase complexes that generate the force for cilia motility and govern beat frequency. Component of the outer arm dynein (ODA). May be involved in a mechanosensory feedback mechanism controlling ODA activity based on external conformational cues by tethering the outer arm dynein heavy chain (DNAH5) to the microtubule within the axoneme. Important for ciliary function in the airways and for the function of the cilia that produce the nodal flow essential for the determination of the left-right asymmetry. The sequence is that of Dynein axonemal light chain 1 (Dnal1) from Mus musculus (Mouse).